We begin with the raw amino-acid sequence, 103 residues long: uncharacterized protein (103 aa).

Residues 1–21 form the signal peptide; that stretch reads MTGFKVSSFFYILALSRFFNA.

This is an uncharacterized protein from Saccharomyces cerevisiae (strain ATCC 204508 / S288c) (Baker's yeast).